The sequence spans 487 residues: Betaine aldehyde dehydrogenase (487 aa).

K(+)-binding residues include S26 and D93. Position 150-152 (150-152 (GAW)) interacts with NAD(+). K162 (charge relay system) is an active-site residue. NAD(+) contacts are provided by residues 176–179 (KPSE) and 229–232 (SVPT). L244 contacts K(+). E250 (proton acceptor) is an active-site residue. NAD(+) is bound by residues G252, C284, and E384. The Nucleophile role is filled by C284. C284 carries the post-translational modification Cysteine sulfenic acid (-SOH). 2 residues coordinate K(+): K454 and G457. E461 functions as the Charge relay system in the catalytic mechanism.

The protein belongs to the aldehyde dehydrogenase family. In terms of assembly, dimer of dimers. The cofactor is K(+).

The enzyme catalyses betaine aldehyde + NAD(+) + H2O = glycine betaine + NADH + 2 H(+). Its pathway is amine and polyamine biosynthesis; betaine biosynthesis via choline pathway; betaine from betaine aldehyde: step 1/1. Its function is as follows. Involved in the biosynthesis of the osmoprotectant glycine betaine. Catalyzes the irreversible oxidation of betaine aldehyde to the corresponding acid. This chain is Betaine aldehyde dehydrogenase, found in Rhizobium johnstonii (strain DSM 114642 / LMG 32736 / 3841) (Rhizobium leguminosarum bv. viciae).